The sequence spans 443 residues: Threonine/serine transporter TdcC (443 aa).

11 helical membrane-spanning segments follow: residues 22-42, 44-64, 97-117, 140-160, 163-183, 207-227, 259-279, 319-339, 366-386, 389-409, and 423-443; these read TTWTLGLFGTAIGAGVLFFPI, AGFGGLIPILLMLVLAYPIAF, GVVITFLYFFAICPLLWIYGV, VVALFLLLLMAFVIWFGKDLM, VMSYLVWPFIASLVLISLSLI, ILVTVWLGISIMVFSFNFSPI, ASMLMVAVVMFFAFSCLFTLS, ASIIALVAIFKSFFGHYLGTL, ISMIFIMGSTWIVAYANPNIL, IEAMGAPIIASLLCLLPMYAI, and DNVFVTLIGLLTILNIVYKLF.

It belongs to the amino acid/polyamine transporter 2 family. SdaC/TdcC subfamily.

Its subcellular location is the cell inner membrane. The catalysed reaction is L-threonine(in) + H(+)(in) = L-threonine(out) + H(+)(out). The enzyme catalyses L-serine(in) + H(+)(in) = L-serine(out) + H(+)(out). In terms of biological role, involved in the import of threonine and serine into the cell, with the concomitant import of a proton (symport system). In Salmonella arizonae (strain ATCC BAA-731 / CDC346-86 / RSK2980), this protein is Threonine/serine transporter TdcC.